We begin with the raw amino-acid sequence, 83 residues long: Large ribosomal subunit protein bL27 (83 aa).

The tract at residues 1 to 22 (MAHKKGQGSTRNGRDSHSKRLG) is disordered.

This sequence belongs to the bacterial ribosomal protein bL27 family.

The chain is Large ribosomal subunit protein bL27 from Protochlamydia amoebophila (strain UWE25).